Here is a 157-residue protein sequence, read N- to C-terminus: Succinate dehydrogenase assembly factor 2-A, mitochondrial (157 aa).

The transit peptide at 1–21 (MLRQVLSSTSVRRLLVSPTRC) directs the protein to the mitochondrion.

The protein belongs to the SDHAF2 family. Interacts with the flavoprotein subunit within the SDH catalytic dimer.

It localises to the mitochondrion matrix. In terms of biological role, plays an essential role in the assembly of succinate dehydrogenase (SDH), an enzyme complex (also referred to as respiratory complex II) that is a component of both the tricarboxylic acid (TCA) cycle and the mitochondrial electron transport chain, and which couples the oxidation of succinate to fumarate with the reduction of ubiquinone (coenzyme Q) to ubiquinol. Required for flavinylation (covalent attachment of FAD) of the flavoprotein subunit of the SDH catalytic dimer. The chain is Succinate dehydrogenase assembly factor 2-A, mitochondrial from Drosophila mojavensis (Fruit fly).